The primary structure comprises 413 residues: MSNAASAPKKVVLAYSGGLDTSIILKWLQVEFGCEVVTFTADLGQGEELEPARKKALAAGVKPENIFIEDVREEFVRDFVFPMFRANAVYEGVYLLGTSIARPLIAKRQIEIADMVGADAVCHGATGKGNDQVRFELGYYGLNPDIKVIAPWRDWAFKSRTDLLKFAEEHGIEIAKDKRGEAPFSVDANLLHSSSEGKVLENPAEPAPEFVHMRTVSPEDAPDQAEVITISFEKGDAVAINGEAMSPATLLTALNAYGKKHGIGRLDLLENRFVGMKSRGIYETPGGTILLVAHRGIEQATLDRGAAHLKDELMPKYAELIYNGFWWSPEREMLQAAIDHSQRWVTGDVTMKLYKGNAYLIGRSSPYSLYSEKIVTFEDDHGAYDQKDAAGFIKLNALRLRLLAGRDRKFGKN.

Residues 14–22 and Ala-41 each bind ATP; that span reads AYSGGLDTS. Residues Tyr-94 and Ser-99 each coordinate L-citrulline. ATP is bound at residue Gly-124. 3 residues coordinate L-aspartate: Thr-126, Asn-130, and Asp-131. Asn-130 contacts L-citrulline. L-citrulline is bound by residues Arg-134, Ser-185, Ser-194, Glu-270, and Tyr-282.

The protein belongs to the argininosuccinate synthase family. Type 1 subfamily. As to quaternary structure, homotetramer.

The protein resides in the cytoplasm. The catalysed reaction is L-citrulline + L-aspartate + ATP = 2-(N(omega)-L-arginino)succinate + AMP + diphosphate + H(+). It participates in amino-acid biosynthesis; L-arginine biosynthesis; L-arginine from L-ornithine and carbamoyl phosphate: step 2/3. The sequence is that of Argininosuccinate synthase from Hyphomonas neptunium (strain ATCC 15444).